Here is a 147-residue protein sequence, read N- to C-terminus: MVEWTDFERATIKDVFSKIEYEVVGPAALARCLVVYPWTQRYFGNFGNLYNAAAITGNPKVAKHGITILHGLDKAVKNMDDIRNTYAELSVLHSEKLHVDPDNFKLLADCLTIVVAAQMGKAFTGEIQAAFQKFLAVVVSSLGRQYH.

A Globin domain is found at 3–147 (EWTDFERATI…VVSSLGRQYH (145 aa)). Residues H64 and H93 each contribute to the heme b site.

This sequence belongs to the globin family. Hb 1 is a heterotetramer of two alpha-1 and two beta chains. Hb 2 is a heterotetramer of two alpha-2 and two beta chains. Red blood cells.

Functionally, involved in oxygen transport from gills to the various peripheral tissues. This chain is Hemoglobin subunit beta (hbb), found in Cottoperca gobio (Frogmouth).